Consider the following 133-residue polypeptide: Nickel-responsive regulator (133 aa).

4 residues coordinate Ni(2+): His-76, His-87, His-89, and Cys-95.

Belongs to the transcriptional regulatory CopG/NikR family. In terms of assembly, homotetramer. It depends on Ni(2+) as a cofactor.

In terms of biological role, transcriptional repressor of the nikABCDE operon. Is active in the presence of excessive concentrations of intracellular nickel. This chain is Nickel-responsive regulator, found in Escherichia coli (strain SE11).